The sequence spans 347 residues: tRNA N6-adenosine threonylcarbamoyltransferase (347 aa).

Fe cation contacts are provided by His113 and His117. Substrate-binding positions include 136–140 (IVSGG), Asp170, Gly183, Asp187, and Asn282. Asp310 contacts Fe cation.

The protein belongs to the KAE1 / TsaD family. The cofactor is Fe(2+).

Its subcellular location is the cytoplasm. It catalyses the reaction L-threonylcarbamoyladenylate + adenosine(37) in tRNA = N(6)-L-threonylcarbamoyladenosine(37) in tRNA + AMP + H(+). Its function is as follows. Required for the formation of a threonylcarbamoyl group on adenosine at position 37 (t(6)A37) in tRNAs that read codons beginning with adenine. Is involved in the transfer of the threonylcarbamoyl moiety of threonylcarbamoyl-AMP (TC-AMP) to the N6 group of A37, together with TsaE and TsaB. TsaD likely plays a direct catalytic role in this reaction. This chain is tRNA N6-adenosine threonylcarbamoyltransferase, found in Bifidobacterium adolescentis (strain ATCC 15703 / DSM 20083 / NCTC 11814 / E194a).